Here is a 279-residue protein sequence, read N- to C-terminus: Energy-coupling factor transporter ATP-binding protein EcfA (279 aa).

The region spanning 4-239 is the ABC transporter domain; it reads VETKDLYFRY…VETIRKANLR (236 aa). Residue 37-44 participates in ATP binding; sequence GPNGAGKS.

The protein belongs to the ABC transporter superfamily. Energy-coupling factor EcfA family. Forms a stable energy-coupling factor (ECF) transporter complex composed of 2 membrane-embedded substrate-binding proteins (S component), 2 ATP-binding proteins (A component) and 2 transmembrane proteins (T component).

Its subcellular location is the cell membrane. In terms of biological role, ATP-binding (A) component of a common energy-coupling factor (ECF) ABC-transporter complex. Unlike classic ABC transporters this ECF transporter provides the energy necessary to transport a number of different substrates. The protein is Energy-coupling factor transporter ATP-binding protein EcfA of Methanocaldococcus jannaschii (strain ATCC 43067 / DSM 2661 / JAL-1 / JCM 10045 / NBRC 100440) (Methanococcus jannaschii).